A 517-amino-acid polypeptide reads, in one-letter code: Methylmalonyl-CoA decarboxylase subunit alpha (517 aa).

The CoA carboxyltransferase N-terminal domain maps to 4–260 (AAKKIQDLQK…NNMEKAPEFG (257 aa)). Residues 271-513 (ELDALMPDNP…REKLPAKKHG (243 aa)) form the CoA carboxyltransferase C-terminal domain.

Belongs to the AccD/PCCB family. As to quaternary structure, the methylmalonyl-CoA decarboxylase is composed of four subunits: the carboxyltransferase alpha subunit (MmdA), the tunnel beta subunit (MmdB), the biotin-containing gamma subunit (MmdC) and the delta subunit (MmdD).

It localises to the cell membrane. The catalysed reaction is (S)-methylmalonyl-CoA + Na(+)(in) + H(+)(out) = propanoyl-CoA + Na(+)(out) + CO2. Its function is as follows. Carboxyltransferase subunit of the sodium ion pump methylmalonyl-CoA decarboxylase, which converts the chemical energy of a decarboxylation reaction into an electrochemical gradient of Na(+) ions across the cytoplasmic membrane, thereby creating a sodium ion motive force that is used for ATP synthesis. The alpha subunit catalyzes the Na(+)-independent carboxyltransfer from methylmalonyl-CoA to the prosthetic biotin group located on the gamma subunit. This Propionigenium modestum protein is Methylmalonyl-CoA decarboxylase subunit alpha.